The primary structure comprises 442 residues: MITPKVLSGFKDRLPKDAIQKAQLLAKVSVVFQSFGFVPIETPHLEYAEALLPDASSDIQKEIYRFKDHGDRDVALRFDLTVPLARFVSLHHQILGMPFKRYAIGNVFRGERAQKGRYREFTQCDFDFIGSESLVCDAEIIQVIIASLKALDLEDFCVSINHRKILNGICEYFGVSQVNEALRIVDKLEKIGLDGVGEELKKECDLNSNTIKELLEMVQIKQNDLSHAEFFEKIAYLKDYNENLKKGIQDLERLYQLLGDLQISQNLYKIDFSIARGLGYYTGIVYETTLNDMKSLGSVCSGGRYDHLTKNFSKENLQGVGASIGIDRLIVALSEMQLLDERSTQAKVLIACMHEEYFSYANRLAESLRQSGIFSEVYPEAQKIKKPFSYANHKGHEFVAVIGEEEFKSETLSLKNMHSGMQLNCLSFLKALEIIGENDEDL.

The protein belongs to the class-II aminoacyl-tRNA synthetase family. Homodimer.

It is found in the cytoplasm. It catalyses the reaction tRNA(His) + L-histidine + ATP = L-histidyl-tRNA(His) + AMP + diphosphate + H(+). The chain is Histidine--tRNA ligase from Helicobacter pylori (strain G27).